The following is a 100-amino-acid chain: NADH-quinone oxidoreductase subunit K (100 aa).

The next 3 membrane-spanning stretches (helical) occupy residues 2-22 (ITLS…LIGI), 29-49 (IMLF…LAAI), and 63-83 (LFIV…LILW).

The protein belongs to the complex I subunit 4L family. In terms of assembly, NDH-1 is composed of 14 different subunits. Subunits NuoA, H, J, K, L, M, N constitute the membrane sector of the complex.

The protein localises to the cell inner membrane. The enzyme catalyses a quinone + NADH + 5 H(+)(in) = a quinol + NAD(+) + 4 H(+)(out). NDH-1 shuttles electrons from NADH, via FMN and iron-sulfur (Fe-S) centers, to quinones in the respiratory chain. The immediate electron acceptor for the enzyme in this species is believed to be ubiquinone. Couples the redox reaction to proton translocation (for every two electrons transferred, four hydrogen ions are translocated across the cytoplasmic membrane), and thus conserves the redox energy in a proton gradient. The polypeptide is NADH-quinone oxidoreductase subunit K (Campylobacter curvus (strain 525.92)).